A 300-amino-acid polypeptide reads, in one-letter code: Non-secreted LysM effector LysM16 (300 aa).

In terms of domain architecture, LysM spans 176-222 (EWHTVFSGDTCQLIEAEYGITLEKFIALNTYVNSTCGNIWPDYAYCV).

It belongs to the secreted LysM effector family.

Functionally, non-secreted LysM effector that might be involved in manipulation of host defenses for successful infection. The protein is Non-secreted LysM effector LysM16 of Penicillium expansum (Blue mold rot fungus).